The primary structure comprises 266 residues: 4-hydroxy-tetrahydrodipicolinate reductase (266 aa).

Residue 10–15 (GPRGRM) participates in NAD(+) binding. Lys38 contacts NADP(+). Residues 99 to 101 (GTT) and 125 to 128 (APNF) contribute to the NAD(+) site. Residue His155 is the Proton donor/acceptor of the active site. His156 serves as a coordination point for (S)-2,3,4,5-tetrahydrodipicolinate. Residue Lys159 is the Proton donor of the active site. 165-166 (GT) serves as a coordination point for (S)-2,3,4,5-tetrahydrodipicolinate.

The protein belongs to the DapB family.

The protein resides in the cytoplasm. It carries out the reaction (S)-2,3,4,5-tetrahydrodipicolinate + NAD(+) + H2O = (2S,4S)-4-hydroxy-2,3,4,5-tetrahydrodipicolinate + NADH + H(+). The enzyme catalyses (S)-2,3,4,5-tetrahydrodipicolinate + NADP(+) + H2O = (2S,4S)-4-hydroxy-2,3,4,5-tetrahydrodipicolinate + NADPH + H(+). Its pathway is amino-acid biosynthesis; L-lysine biosynthesis via DAP pathway; (S)-tetrahydrodipicolinate from L-aspartate: step 4/4. Its function is as follows. Catalyzes the conversion of 4-hydroxy-tetrahydrodipicolinate (HTPA) to tetrahydrodipicolinate. In Bacillus mycoides (strain KBAB4) (Bacillus weihenstephanensis), this protein is 4-hydroxy-tetrahydrodipicolinate reductase.